The chain runs to 296 residues: Acetylglutamate kinase (296 aa).

Substrate-binding positions include 67-68, R89, and N194; that span reads GG.

This sequence belongs to the acetylglutamate kinase family. ArgB subfamily.

The protein resides in the cytoplasm. The catalysed reaction is N-acetyl-L-glutamate + ATP = N-acetyl-L-glutamyl 5-phosphate + ADP. The protein operates within amino-acid biosynthesis; L-arginine biosynthesis; N(2)-acetyl-L-ornithine from L-glutamate: step 2/4. Functionally, catalyzes the ATP-dependent phosphorylation of N-acetyl-L-glutamate. This Brucella canis (strain ATCC 23365 / NCTC 10854 / RM-666) protein is Acetylglutamate kinase.